A 292-amino-acid chain; its full sequence is Undecaprenyl-diphosphatase (292 aa).

A run of 7 helical transmembrane segments spans residues Met1–Val21, Phe46–Ile66, Ala88–Leu108, Ala114–Ala134, Phe192–Pro212, Val225–Trp245, and Val253–Val273.

Belongs to the UppP family.

The protein localises to the cell inner membrane. It catalyses the reaction di-trans,octa-cis-undecaprenyl diphosphate + H2O = di-trans,octa-cis-undecaprenyl phosphate + phosphate + H(+). In terms of biological role, catalyzes the dephosphorylation of undecaprenyl diphosphate (UPP). Confers resistance to bacitracin. This Anaeromyxobacter dehalogenans (strain 2CP-C) protein is Undecaprenyl-diphosphatase.